We begin with the raw amino-acid sequence, 702 residues long: Glucoamylase (702 aa).

The N-terminal stretch at 1–21 (MSRKLIKYLPLLVLASSVLSG) is a signal peptide. The N-palmitoyl cysteine moiety is linked to residue Cys22. Residue Cys22 is the site of S-diacylglycerol cysteine attachment. Position 342 (Trp342) interacts with substrate. Glu452 functions as the Proton acceptor in the catalytic mechanism. Glu455 functions as the Proton donor in the catalytic mechanism.

It belongs to the glycosyl hydrolase 15 family.

It is found in the cell membrane. The catalysed reaction is Hydrolysis of terminal (1-&gt;4)-linked alpha-D-glucose residues successively from non-reducing ends of the chains with release of beta-D-glucose.. CGA has typical kinetic properties for a glucoamylase, but this bacterial enzyme had higher isomaltose-hydrolyzing activity than other eukaryotic glucoamylases. The protein is Glucoamylase (cga) of Clostridium sp. (strain G0005).